Here is a 428-residue protein sequence, read N- to C-terminus: Phosphomethylpyrimidine synthase 2 (428 aa).

Residues methionine 94, tyrosine 123, histidine 162, serine 184–glycine 186, asparagine 225–arginine 228, and glutamate 264 each bind substrate. Zn(2+) is bound at residue histidine 268. Substrate is bound at residue tyrosine 291. Histidine 332 contributes to the Zn(2+) binding site. Residues cysteine 408, cysteine 411, and cysteine 415 each contribute to the [4Fe-4S] cluster site.

The protein belongs to the ThiC family. The cofactor is [4Fe-4S] cluster.

It carries out the reaction 5-amino-1-(5-phospho-beta-D-ribosyl)imidazole + S-adenosyl-L-methionine = 4-amino-2-methyl-5-(phosphooxymethyl)pyrimidine + CO + 5'-deoxyadenosine + formate + L-methionine + 3 H(+). The protein operates within cofactor biosynthesis; thiamine diphosphate biosynthesis. In terms of biological role, catalyzes the synthesis of the hydroxymethylpyrimidine phosphate (HMP-P) moiety of thiamine from aminoimidazole ribotide (AIR) in a radical S-adenosyl-L-methionine (SAM)-dependent reaction. This Methanosarcina mazei (strain ATCC BAA-159 / DSM 3647 / Goe1 / Go1 / JCM 11833 / OCM 88) (Methanosarcina frisia) protein is Phosphomethylpyrimidine synthase 2.